Consider the following 219-residue polypeptide: Apoptosis regulator OPG045 (219 aa).

This sequence belongs to the orthopoxvirus OPG045 family. In terms of assembly, homodimer. Interacts with host pro-apoptotic protein BCL2L11 (via BH3 domain). Interacts with host NLRP1. Interacts with host BAK.

The protein resides in the host mitochondrion outer membrane. It localises to the host cytoplasm. Plays a role in evading host innate immune response by inhibiting host inflammasome activation. Interacts with and inhibits NLR-mediated interleukin-1 beta/IL1B production in infected cells. At the host mitochondria outer membrane, interacts with the BH3 domain of host BAK and prevents BAK from binding active BAX. In turn, host apoptosis is inhibited. The sequence is that of Apoptosis regulator OPG045 (OPG045) from Cynomys gunnisoni (Gunnison's prairie dog).